A 494-amino-acid polypeptide reads, in one-letter code: Glucose-6-phosphate 1-dehydrogenase (494 aa).

2 residues coordinate NADP(+): arginine 46 and lysine 150. Residues histidine 180, lysine 184, glutamate 218, and aspartate 237 each contribute to the substrate site. Residue histidine 242 is the Proton acceptor of the active site. Lysine 342 is a binding site for substrate.

The protein belongs to the glucose-6-phosphate dehydrogenase family.

It carries out the reaction D-glucose 6-phosphate + NADP(+) = 6-phospho-D-glucono-1,5-lactone + NADPH + H(+). The protein operates within carbohydrate degradation; pentose phosphate pathway; D-ribulose 5-phosphate from D-glucose 6-phosphate (oxidative stage): step 1/3. Catalyzes the oxidation of glucose 6-phosphate to 6-phosphogluconolactone. This chain is Glucose-6-phosphate 1-dehydrogenase, found in Aggregatibacter actinomycetemcomitans (Actinobacillus actinomycetemcomitans).